The following is a 118-amino-acid chain: Large ribosomal subunit protein bL20 (118 aa).

This sequence belongs to the bacterial ribosomal protein bL20 family.

Its function is as follows. Binds directly to 23S ribosomal RNA and is necessary for the in vitro assembly process of the 50S ribosomal subunit. It is not involved in the protein synthesizing functions of that subunit. In Trichodesmium erythraeum (strain IMS101), this protein is Large ribosomal subunit protein bL20.